A 281-amino-acid polypeptide reads, in one-letter code: Bifunctional protein FolD (281 aa).

Residues Gly-165–Gly-167, Thr-192, and Val-233 contribute to the NADP(+) site.

It belongs to the tetrahydrofolate dehydrogenase/cyclohydrolase family. In terms of assembly, homodimer.

It carries out the reaction (6R)-5,10-methylene-5,6,7,8-tetrahydrofolate + NADP(+) = (6R)-5,10-methenyltetrahydrofolate + NADPH. The catalysed reaction is (6R)-5,10-methenyltetrahydrofolate + H2O = (6R)-10-formyltetrahydrofolate + H(+). The protein operates within one-carbon metabolism; tetrahydrofolate interconversion. In terms of biological role, catalyzes the oxidation of 5,10-methylenetetrahydrofolate to 5,10-methenyltetrahydrofolate and then the hydrolysis of 5,10-methenyltetrahydrofolate to 10-formyltetrahydrofolate. The sequence is that of Bifunctional protein FolD from Mycobacterium ulcerans (strain Agy99).